The sequence spans 64 residues: Large ribosomal subunit protein bL35 (64 aa).

This sequence belongs to the bacterial ribosomal protein bL35 family.

The protein is Large ribosomal subunit protein bL35 of Shewanella baltica (strain OS223).